The following is a 131-amino-acid chain: Small ribosomal subunit protein bS6 (131 aa).

The tract at residues 98–131 (EASPMARARDERDSRRGPAGERSYDEAHAEEIGE) is disordered. Residues 104-131 (RARDERDSRRGPAGERSYDEAHAEEIGE) are compositionally biased toward basic and acidic residues.

This sequence belongs to the bacterial ribosomal protein bS6 family.

Binds together with bS18 to 16S ribosomal RNA. The sequence is that of Small ribosomal subunit protein bS6 from Shewanella putrefaciens (strain CN-32 / ATCC BAA-453).